The following is a 74-amino-acid chain: Antimicrobial peptide AcrAP1 (74 aa).

The first 22 residues, 1–22, serve as a signal peptide directing secretion; sequence MEIKYLLTVFLVLLIVSDHCQA. A Lysine amide modification is found at lysine 40. A propeptide spanning residues 46-74 is cleaved from the precursor; sequence DLDGQIDRFRNFRKRDAELEELLSKLPIY.

Belongs to the non-disulfide-bridged peptide (NDBP) superfamily. Short antimicrobial peptide (group 4) family. In terms of tissue distribution, expressed by the venom gland.

The protein localises to the secreted. The protein resides in the target cell membrane. Has antimicrobial activity against the Gram-positive bacteria S.aureus (MIC=8 uM) and the yeast C.albicans (MIC=16 uM). Causes hemolysis on horse erythrocytes (64 uM for 100% hemolysis). Minimum bactericidal concentrations have also been tested against S.aureus and is four-fold higher (MBC=32 uM). The sequence is that of Antimicrobial peptide AcrAP1 from Androctonus crassicauda (Arabian fat-tailed scorpion).